We begin with the raw amino-acid sequence, 323 residues long: tRNA uridine(34) hydroxylase (323 aa).

In terms of domain architecture, Rhodanese spans 123-217 (SDPDVVVIDT…YLETIPEEES (95 aa)). Cys177 serves as the catalytic Cysteine persulfide intermediate.

Belongs to the TrhO family.

It carries out the reaction uridine(34) in tRNA + AH2 + O2 = 5-hydroxyuridine(34) in tRNA + A + H2O. In terms of biological role, catalyzes oxygen-dependent 5-hydroxyuridine (ho5U) modification at position 34 in tRNAs. This is tRNA uridine(34) hydroxylase from Methylobacillus flagellatus (strain ATCC 51484 / DSM 6875 / VKM B-1610 / KT).